A 213-amino-acid chain; its full sequence is N-(5'-phosphoribosyl)anthranilate isomerase (213 aa).

This sequence belongs to the TrpF family.

It catalyses the reaction N-(5-phospho-beta-D-ribosyl)anthranilate = 1-(2-carboxyphenylamino)-1-deoxy-D-ribulose 5-phosphate. It participates in amino-acid biosynthesis; L-tryptophan biosynthesis; L-tryptophan from chorismate: step 3/5. This is N-(5'-phosphoribosyl)anthranilate isomerase from Caulobacter sp. (strain K31).